The primary structure comprises 382 residues: GDP-mannose 4,6 dehydratase 2 (382 aa).

NADP(+) is bound by residues 40 to 45, 97 to 98, 119 to 123, and Tyr-134; these read GITGQD, DM, and LAAQS. Residue Thr-166 is part of the active site. Catalysis depends on nucleophile residues Glu-168 and Tyr-190. NADP(+) is bound by residues Lys-194, His-220, and Arg-225.

It belongs to the NAD(P)-dependent epimerase/dehydratase family. GDP-mannose 4,6-dehydratase subfamily. Requires NADP(+) as cofactor.

The catalysed reaction is GDP-alpha-D-mannose = GDP-4-dehydro-alpha-D-rhamnose + H2O. Its pathway is nucleotide-sugar biosynthesis; GDP-L-fucose biosynthesis via de novo pathway; GDP-L-fucose from GDP-alpha-D-mannose: step 1/2. In terms of biological role, catalyzes the conversion of GDP-D-mannose to GDP-4-dehydro-6-deoxy-D-mannose. The polypeptide is GDP-mannose 4,6 dehydratase 2 (gmd-2) (Caenorhabditis elegans).